A 547-amino-acid polypeptide reads, in one-letter code: Chaperonin GroEL (547 aa).

ATP is bound by residues 30 to 33, lysine 51, 87 to 91, glycine 415, and aspartate 496; these read TLGP and DGTTT. Positions 528–547 are disordered; that stretch reads KGGGAPAGGGMPGGMGDMDF.

This sequence belongs to the chaperonin (HSP60) family. Forms a cylinder of 14 subunits composed of two heptameric rings stacked back-to-back. Interacts with the co-chaperonin GroES.

Its subcellular location is the cytoplasm. The enzyme catalyses ATP + H2O + a folded polypeptide = ADP + phosphate + an unfolded polypeptide.. In terms of biological role, together with its co-chaperonin GroES, plays an essential role in assisting protein folding. The GroEL-GroES system forms a nano-cage that allows encapsulation of the non-native substrate proteins and provides a physical environment optimized to promote and accelerate protein folding. The sequence is that of Chaperonin GroEL from Caulobacter vibrioides (strain ATCC 19089 / CIP 103742 / CB 15) (Caulobacter crescentus).